We begin with the raw amino-acid sequence, 431 residues long: O-Mevalon transferase macI (431 aa).

Asparagine 176 carries N-linked (GlcNAc...) asparagine glycosylation. A run of 4 helical transmembrane segments spans residues 198–218 (IYALIVCGFAITIYSHFAILM), 301–321 (LLMMSFVISGLIHACGTYQVT), 336–356 (YFALQGMAIIAEDFGCWVLGI), and 404–424 (LFAALELVRVSAVAVPGNFVA).

This sequence belongs to the wax synthase family.

It is found in the membrane. It participates in secondary metabolite biosynthesis; terpenoid biosynthesis. O-Mevalon transferase; part of the gene cluster that mediates the biosynthesis of macrophorins, isoprenoid epoxycyclohexenones containing cyclized drimane moieties. The first step of the pathway is the synthesis of 6-methylsalicylic acid (6-MSA) by the polyketide synthase macA. 6-MSA is then converted to m-cresol by the decarboxylase macB. The cytochrome P450 monooxygenase macC then catalyzes the oxidation of m-cresol to toluquinol. Epoxidation of toluquinol is then performed by the short chain dehydrogenase macD, with the help of macE, and a further prenylation by macG leads to 7-deacetoxyyanuthone A. The next step is the hydroxylation of C-22 of 7-deacetoxyyanuthone A by the cytochrome P450 monooxygenase macH to yield 22-deacetylyanuthone A. O-Mevalon transferase macI then attaches mevalon to the hydroxyl group of 22-deacetylyanuthone A to produce yanuthone E. The terpene cyclase macJ catalyzes the cyclization of 22-deacetylyanuthone A to macrophorin A. MacJ is also able to catalyze cyclization of yanuthone E and 7-deacetoxyyanuthone A to their corresponding macrophorins. The macJ products can be further modified by macH and macJ, as well as by the FAD-dependent monooxygenase macF, to produce additional macrophorins, including 4'-oxomacrophorin A, 4'-oxomacrophorin D and 4'-oxomacrophorin E. The sequence is that of O-Mevalon transferase macI from Penicillium terrestre.